A 596-amino-acid polypeptide reads, in one-letter code: Aspartate--tRNA(Asp/Asn) ligase (596 aa).

Residue glutamate 172 coordinates L-aspartate. The tract at residues 196-199 is aspartate; sequence QLFK. Arginine 218 contacts L-aspartate. ATP is bound by residues 218–220 and glutamine 227; that span reads RDE. Residue histidine 455 coordinates L-aspartate. An ATP-binding site is contributed by glutamate 489. Arginine 496 lines the L-aspartate pocket. 541 to 544 contributes to the ATP binding site; it reads GLDR.

This sequence belongs to the class-II aminoacyl-tRNA synthetase family. Type 1 subfamily. In terms of assembly, homodimer.

It localises to the cytoplasm. It carries out the reaction tRNA(Asx) + L-aspartate + ATP = L-aspartyl-tRNA(Asx) + AMP + diphosphate. Its function is as follows. Aspartyl-tRNA synthetase with relaxed tRNA specificity since it is able to aspartylate not only its cognate tRNA(Asp) but also tRNA(Asn). Reaction proceeds in two steps: L-aspartate is first activated by ATP to form Asp-AMP and then transferred to the acceptor end of tRNA(Asp/Asn). This is Aspartate--tRNA(Asp/Asn) ligase from Bordetella bronchiseptica (strain ATCC BAA-588 / NCTC 13252 / RB50) (Alcaligenes bronchisepticus).